A 256-amino-acid chain; its full sequence is Alcohol dehydrogenase (256 aa).

Residue 12–35 (FVAGLGGIGLDTSKELVKRDLKNL) coordinates NAD(+). S140 serves as a coordination point for substrate. The Proton acceptor role is filled by Y153.

Belongs to the short-chain dehydrogenases/reductases (SDR) family. In terms of assembly, homodimer.

It catalyses the reaction a primary alcohol + NAD(+) = an aldehyde + NADH + H(+). The catalysed reaction is a secondary alcohol + NAD(+) = a ketone + NADH + H(+). This Drosophila erecta (Fruit fly) protein is Alcohol dehydrogenase (Adh).